Consider the following 307-residue polypeptide: Aspartate carbamoyltransferase catalytic subunit (307 aa).

Residues R54 and T55 each coordinate carbamoyl phosphate. Residue K83 participates in L-aspartate binding. The carbamoyl phosphate site is built by R104, H132, and Q135. R165 and R228 together coordinate L-aspartate. Carbamoyl phosphate is bound by residues L267 and P268.

The protein belongs to the aspartate/ornithine carbamoyltransferase superfamily. ATCase family. Heterododecamer (2C3:3R2) of six catalytic PyrB chains organized as two trimers (C3), and six regulatory PyrI chains organized as three dimers (R2).

It catalyses the reaction carbamoyl phosphate + L-aspartate = N-carbamoyl-L-aspartate + phosphate + H(+). It participates in pyrimidine metabolism; UMP biosynthesis via de novo pathway; (S)-dihydroorotate from bicarbonate: step 2/3. Its function is as follows. Catalyzes the condensation of carbamoyl phosphate and aspartate to form carbamoyl aspartate and inorganic phosphate, the committed step in the de novo pyrimidine nucleotide biosynthesis pathway. The polypeptide is Aspartate carbamoyltransferase catalytic subunit (Clostridium botulinum (strain ATCC 19397 / Type A)).